A 353-amino-acid chain; its full sequence is Rhodopsin (353 aa).

The Extracellular segment spans residues 1-36 (MNGTEGPYFYVPMVNTSGIVRSPYEYPQYYLVNPAA). Residues Asn2 and Asn15 are each glycosylated (N-linked (GlcNAc...) asparagine). A helical transmembrane segment spans residues 37 to 61 (YAALGAYMFLLILVGFPINFLTLYV). At 62–73 (TIEHKKLRTPLN) the chain is on the cytoplasmic side. The helical transmembrane segment at 74 to 96 (YILLNLAVADLFMVFGGFTTTMY) threads the bilayer. Over 97–110 (TSMHGYFVLGRLGC) the chain is Extracellular. Residues Cys110 and Cys187 are joined by a disulfide bond. The helical transmembrane segment at 111–133 (NIEGFFATLGGEIALWSLVVLAI) threads the bilayer. The 'Ionic lock' involved in activated form stabilization signature appears at 134–136 (ERW). At 134–152 (ERWVVVCKPISNFRFGENH) the chain is on the cytoplasmic side. A helical transmembrane segment spans residues 153-173 (AIMGLAFTWLMALACAAPPLV). Residues 174-202 (GWSRYIPEGMQCSCGIDYYTRAEGFNNES) lie on the Extracellular side of the membrane. N-linked (GlcNAc...) asparagine glycosylation is present at Asn200. Residues 203–224 (FVIYMFICHFSIPLLVVFFCYG) form a helical membrane-spanning segment. At 225 to 252 (RLLCAVKEAAAAQQESETTQRAEREVTR) the chain is on the cytoplasmic side. The helical transmembrane segment at 253-274 (MVIMMVIAFLVCWLPYASVAWW) threads the bilayer. Residues 275–286 (IFTHQGSDFGPV) lie on the Extracellular side of the membrane. The helical transmembrane segment at 287 to 308 (FMTIPAFFAKSSSIYNPMIYIC) threads the bilayer. Lys296 is modified (N6-(retinylidene)lysine). Residues 309–353 (LNKQFRHCMITTLCCGKNPFEEEEGASTASKTEASSVSSSSVSPA) lie on the Cytoplasmic side of the membrane. 2 S-palmitoyl cysteine lipidation sites follow: Cys322 and Cys323. Residues 331-353 (EEGASTASKTEASSVSSSSVSPA) are disordered. The span at 334-353 (ASTASKTEASSVSSSSVSPA) shows a compositional bias: low complexity.

This sequence belongs to the G-protein coupled receptor 1 family. Opsin subfamily. Post-translationally, phosphorylated on some or all of the serine and threonine residues present in the C-terminal region. In terms of processing, contains one covalently linked retinal chromophore.

It is found in the membrane. The protein localises to the cell projection. It localises to the cilium. Its subcellular location is the photoreceptor outer segment. Its function is as follows. Photoreceptor required for image-forming vision at low light intensity. While most salt water fish species use retinal as chromophore, most freshwater fish use 3-dehydroretinal, or a mixture of retinal and 3-dehydroretinal. Light-induced isomerization of 11-cis to all-trans retinal triggers a conformational change that activates signaling via G-proteins. Subsequent receptor phosphorylation mediates displacement of the bound G-protein alpha subunit by arrestin and terminates signaling. In Diplodus vulgaris (Common two-banded seabream), this protein is Rhodopsin (rho).